Here is a 236-residue protein sequence, read N- to C-terminus: Large ribosomal subunit protein uL3 (236 aa).

It belongs to the universal ribosomal protein uL3 family. As to quaternary structure, part of the 50S ribosomal subunit. Forms a cluster with proteins L14 and L19.

Its function is as follows. One of the primary rRNA binding proteins, it binds directly near the 3'-end of the 23S rRNA, where it nucleates assembly of the 50S subunit. This chain is Large ribosomal subunit protein uL3, found in Mycoplasmoides gallisepticum (strain R(low / passage 15 / clone 2)) (Mycoplasma gallisepticum).